A 255-amino-acid chain; its full sequence is 14-3-3 protein epsilon (255 aa).

At Met1 the chain carries N-acetylmethionine. Position 50 is an N6-acetyllysine; alternate (Lys50). Lys50 participates in a covalent cross-link: Glycyl lysine isopeptide (Lys-Gly) (interchain with G-Cter in SUMO2); alternate. Residue Ser65 is modified to Phosphoserine. N6-acetyllysine occurs at positions 69, 118, and 123. Position 131 is a phosphotyrosine (Tyr131). Position 137 is a phosphothreonine (Thr137). Ser210 carries the post-translational modification Phosphoserine. A Phosphothreonine modification is found at Thr232. A disordered region spans residues 234-255 (DMQGDGEEQNKEALQDVEDENQ).

The protein belongs to the 14-3-3 family. In terms of assembly, homodimer. Heterodimerizes with YWHAZ. Interacts with PKA-phosphorylated AANAT. Interacts with ABL1 (phosphorylated form); the interaction retains it in the cytoplasm. Interacts with ARHGEF28. Interacts with BEX3. Weakly interacts with CDKN1B. Interacts with the 'Thr-369' phosphorylated form of DAPK2. Interacts with DENND1A. Interacts with GAB2. Interacts with phosphorylated GRB10. Interacts with KSR1. Interacts with NDEL1. Interacts with PI4KB, TBC1D22A and TBC1D22B. Interacts with the phosphorylated (by AKT1) form of SRPK2. Interacts with TIAM2. Interacts with the 'Ser-1134' and 'Ser-1161' phosphorylated form of SOS1. Interacts with ZFP36 (via phosphorylated form). Interacts with SLITRK1. Interacts with HSF1 (via phosphorylated form); this interaction promotes HSF1 sequestration in the cytoplasm in a ERK-dependent manner. Interacts with RIPOR2. Interacts with KLHL22; required for the nuclear localization of KLHL22 upon amino acid starvation. Interacts with CRTC1. Interacts with CRTC2 (probably when phosphorylated at 'Ser-171'). Interacts with CRTC3 (probably when phosphorylated at 'Ser-162' and/or 'Ser-273'). Interacts with ATP2B1 and ATP2B3; this interaction inhibits calcium-transporting ATPase activity. Interacts with MEFV. Interacts with RNF115. Interacts with GPR15; this interaction promotes ER-to-Golgi transport of GPR15.

The protein localises to the nucleus. It is found in the cytoplasm. It localises to the melanosome. Its function is as follows. Adapter protein implicated in the regulation of a large spectrum of both general and specialized signaling pathways. Binds to a large number of partners, usually by recognition of a phosphoserine or phosphothreonine motif. Binding generally results in the modulation of the activity of the binding partner. Positively regulates phosphorylated protein HSF1 nuclear export to the cytoplasm. In Rattus norvegicus (Rat), this protein is 14-3-3 protein epsilon (Ywhae).